The sequence spans 301 residues: Mas-related G-protein coupled receptor member A6 (301 aa).

Residues 1 to 15 (MHRSISIRILITNLM) are Extracellular-facing. A helical membrane pass occupies residues 16-36 (IVILGLVGLTGNAIVFWLLLF). The Cytoplasmic portion of the chain corresponds to 37 to 42 (RLRRNA). A helical transmembrane segment spans residues 43 to 63 (FSIYILNLALADFLFLLCHII). Residues 64-77 (ASTEHILTFSSPNS) lie on the Extracellular side of the membrane. Residues 78-98 (IFINCLYTFRVLLYIAGLNML) traverse the membrane as a helical segment. Residues 99-128 (SAISIERCLSVMCPIWYRCHRPEHTSTVMC) are Cytoplasmic-facing. The helical transmembrane segment at 129–149 (AMIWVLSLLLCILYRYFCGFL) threads the bilayer. The Extracellular portion of the chain corresponds to 150–163 (DTKYEDDYGCLAMN). The chain crosses the membrane as a helical span at residues 164–184 (FLTTAYLMFLFVVLCVSSLAL). Residues 185–203 (LARLFCGAGRMKLTRLYVT) are Cytoplasmic-facing. The helical transmembrane segment at 204 to 224 (ITLTLLVFLLCGLPCGFYWFL) threads the bilayer. Over 225–240 (LSKIKNVFSVFEFSLY) the chain is Extracellular. Residues 241–261 (LTSVVLTAINSCANPIIYFFV) traverse the membrane as a helical segment. The Cytoplasmic segment spans residues 262–301 (GSFRHRLKHQTLKMVLQSALQDTPETPENMVEMSRNKAEL).

It belongs to the G-protein coupled receptor 1 family. Mas subfamily. As to expression, expressed in a subset of sensory neurons that includes nociceptors. Expressed in the subclass of non-peptidergic sensory neurons that are IB4(+) and VR1(-).

It is found in the cell membrane. Functionally, orphan receptor. May be a receptor for RFamide-family neuropeptides such as NPFF and NPAF, which are analgesic in vivo. May regulate nociceptor function and/or development, including the sensation or modulation of pain. The chain is Mas-related G-protein coupled receptor member A6 (Mrgpra6) from Mus musculus (Mouse).